The following is a 223-amino-acid chain: MNVKIKKLHNWDMTPTEAILLQRELAQKVSACGTLSSISLVAGADVWHSRTSGMGRAAVVVLSYPDMNLVEVSRSEGDCHIPYIPGLLSFREMPLLLSAFEGLESMPDFILMDGQGLAHPRRLGIASHLGLFLNKPVIGCAKSRLVGEYAPLADEAGSYSDLYHNSQLVGRVLRTRRGVNPLFISVGHKICLEEACSRVADCCRGYRLPEPLRHAHLAAAQLI.

Mg(2+)-binding residues include Asp-45 and Asp-113.

This sequence belongs to the endonuclease V family. Mg(2+) is required as a cofactor.

It is found in the cytoplasm. The enzyme catalyses Endonucleolytic cleavage at apurinic or apyrimidinic sites to products with a 5'-phosphate.. In terms of biological role, DNA repair enzyme involved in the repair of deaminated bases. Selectively cleaves double-stranded DNA at the second phosphodiester bond 3' to a deoxyinosine leaving behind the intact lesion on the nicked DNA. This chain is Endonuclease V, found in Dehalococcoides mccartyi (strain CBDB1).